We begin with the raw amino-acid sequence, 135 residues long: Galectin-1 (135 aa).

Alanine 2 is modified (N-acetylalanine). A Galectin domain is found at glycine 4–glutamate 135. An N6-acetyllysine mark is found at lysine 13 and lysine 29. Phosphoserine is present on serine 30. A beta-D-galactoside is bound by residues histidine 45 to arginine 49, histidine 53, asparagine 62, and tryptophan 69 to glutamate 72. Lysine 108 is subject to N6-acetyllysine; alternate. N6-succinyllysine; alternate is present on lysine 108. Residue lysine 128 is modified to N6-acetyllysine.

In terms of assembly, homodimer. Binds LGALS3BP. Interacts with CD2, CD3, CD4, CD6, CD7, CD43, ALCAM and CD45. Interacts with laminin (via poly-N-acetyllactosamine). Interacts with SUSD2. Interacts with cargo receptor TMED10; the interaction mediates the translocation from the cytoplasm into the ERGIC (endoplasmic reticulum-Golgi intermediate compartment) and thereby secretion.

It is found in the secreted. Its subcellular location is the extracellular space. The protein localises to the extracellular matrix. It localises to the cytoplasm. Functionally, lectin that binds beta-galactoside and a wide array of complex carbohydrates. Plays a role in regulating apoptosis, cell proliferation and cell differentiation. Inhibits CD45 protein phosphatase activity and therefore the dephosphorylation of Lyn kinase. Strong inducer of T-cell apoptosis. This is Galectin-1 (LGALS1) from Bos taurus (Bovine).